A 371-amino-acid chain; its full sequence is Riboflavin biosynthesis protein RibD (371 aa).

Positions 1 to 150 (MEVSSEQQLF…QPYLHQRETG (150 aa)) are deaminase. One can recognise a CMP/dCMP-type deaminase domain in the interval 6-128 (EQQLFFMREA…RLKEAGISVY (123 aa)). H55 is a binding site for Zn(2+). The Proton donor role is filled by E57. C80 and C89 together coordinate Zn(2+). The interval 151-371 (LPWVVMKTAA…CFECVGREDG (221 aa)) is reductase. A159 lines the NADP(+) pocket. S173 contributes to the substrate binding site. W175 provides a ligand contact to NADP(+). Residue R189 participates in substrate binding. Residues T201 and D205 each coordinate NADP(+). Residues L209 and R212 each coordinate substrate. An NADP(+)-binding site is contributed by S230. Position 299 (E299) interacts with substrate. 301-307 (GARLHSA) serves as a coordination point for NADP(+).

The protein in the N-terminal section; belongs to the cytidine and deoxycytidylate deaminase family. It in the C-terminal section; belongs to the HTP reductase family. Zn(2+) is required as a cofactor.

It catalyses the reaction 2,5-diamino-6-hydroxy-4-(5-phosphoribosylamino)-pyrimidine + H2O + H(+) = 5-amino-6-(5-phospho-D-ribosylamino)uracil + NH4(+). It carries out the reaction 5-amino-6-(5-phospho-D-ribitylamino)uracil + NADP(+) = 5-amino-6-(5-phospho-D-ribosylamino)uracil + NADPH + H(+). It participates in cofactor biosynthesis; riboflavin biosynthesis; 5-amino-6-(D-ribitylamino)uracil from GTP: step 2/4. The protein operates within cofactor biosynthesis; riboflavin biosynthesis; 5-amino-6-(D-ribitylamino)uracil from GTP: step 3/4. Converts 2,5-diamino-6-(ribosylamino)-4(3h)-pyrimidinone 5'-phosphate into 5-amino-6-(ribosylamino)-2,4(1h,3h)-pyrimidinedione 5'-phosphate. The sequence is that of Riboflavin biosynthesis protein RibD (ribD) from Chlamydia muridarum (strain MoPn / Nigg).